The following is a 263-amino-acid chain: Mediator of RNA polymerase II transcription subunit 7 (263 aa).

Residues 1-10 (MADAAQQRTL) are compositionally biased toward polar residues. 3 disordered regions span residues 1–57 (MADA…PAEL), 101–122 (ITQL…SEPS), and 222–247 (GIAA…QKTI). Residues 24–47 (FTPDNLKRLEEIKKEASKGEDGKP) are compositionally biased toward basic and acidic residues. Polar residues predominate over residues 101 to 111 (ITQLYPSSSPA). Residues 234–247 (EDGRKESETSQKTI) are compositionally biased toward basic and acidic residues.

It belongs to the Mediator complex subunit 7 family. As to quaternary structure, component of the Mediator complex.

It localises to the nucleus. Functionally, component of the Mediator complex, a coactivator involved in the regulated transcription of nearly all RNA polymerase II-dependent genes. Mediator functions as a bridge to convey information from gene-specific regulatory proteins to the basal RNA polymerase II transcription machinery. Mediator is recruited to promoters by direct interactions with regulatory proteins and serves as a scaffold for the assembly of a functional preinitiation complex with RNA polymerase II and the general transcription factors. The polypeptide is Mediator of RNA polymerase II transcription subunit 7 (med7) (Aspergillus niger (strain ATCC MYA-4892 / CBS 513.88 / FGSC A1513)).